Reading from the N-terminus, the 478-residue chain is D-ribulose kinase (478 aa).

The N-terminal 38 residues, 1–38, are a transit peptide targeting the chloroplast; that stretch reads MLILRQFQISSFELFQSPKQTGFYSSSRSVPLPRTRFY. Residues aspartate 60, 64 to 67, and aspartate 278 each bind substrate; that span reads SGGR. ATP-binding positions include serine 300, glycine 338, and 433–437; that span reads GGAKN.

The protein belongs to the FGGY kinase family. A divalent metal cation is required as a cofactor.

The protein localises to the plastid. The protein resides in the chloroplast. The enzyme catalyses D-ribulose + ATP = D-ribulose 5-phosphate + ADP + H(+). Exhibits ATP hydrolysis without substrate. Can phosphorylate D-ribulose with low efficiency. The sequence is that of D-ribulose kinase from Arabidopsis thaliana (Mouse-ear cress).